The following is a 538-amino-acid chain: Importin subunit alpha-4 (538 aa).

One can recognise an IBB domain in the interval 1–58 (MSLRPSTRAELRKKIYKTGVDADEARRRREDNLVEIRKNKREDSLLKKRREGMMLQQQ). 8 ARM repeats span residues 112 to 152 (SPPI…NVAS), 155 to 194 (SDHT…NVAG), 197 to 237 (PNCR…NFCR), 239 to 278 (KPPT…YLSD), 281 to 320 (NDKI…NIVT), 323 to 363 (DSQT…NITA), 366 to 405 (KLQI…NATS), and 409 to 448 (HEQI…NILK).

The protein belongs to the importin alpha family. In terms of assembly, forms a complex with importin subunit beta-1. Interacts with A.tumefaciens VirD2 and VirE2.

Its subcellular location is the nucleus envelope. In terms of biological role, binds to conventional NLS motifs and mediates nuclear protein import across the nuclear envelope. Acts as a cellular receptor for the nuclear import of the virD2 protein of Agrobacterium and is essential for Agrobacterium-mediated root transformation. The chain is Importin subunit alpha-4 from Arabidopsis thaliana (Mouse-ear cress).